Reading from the N-terminus, the 150-residue chain is UPF0201 protein APE_1751 (150 aa).

It belongs to the UPF0201 family.

This is UPF0201 protein APE_1751 from Aeropyrum pernix (strain ATCC 700893 / DSM 11879 / JCM 9820 / NBRC 100138 / K1).